A 199-amino-acid polypeptide reads, in one-letter code: Holliday junction resolvase RecU (199 aa).

Residues threonine 82, aspartate 84, glutamate 97, and glutamine 116 each coordinate Mg(2+).

This sequence belongs to the RecU family. Requires Mg(2+) as cofactor.

It is found in the cytoplasm. The catalysed reaction is Endonucleolytic cleavage at a junction such as a reciprocal single-stranded crossover between two homologous DNA duplexes (Holliday junction).. In terms of biological role, endonuclease that resolves Holliday junction intermediates in genetic recombination. Cleaves mobile four-strand junctions by introducing symmetrical nicks in paired strands. Promotes annealing of linear ssDNA with homologous dsDNA. Required for DNA repair, homologous recombination and chromosome segregation. The protein is Holliday junction resolvase RecU of Streptococcus agalactiae serotype Ia (strain ATCC 27591 / A909 / CDC SS700).